We begin with the raw amino-acid sequence, 563 residues long: DEAD-box ATP-dependent RNA helicase 25 (563 aa).

The disordered stretch occupies residues 21–57; it reads KKLTSDEDGSGKLVKDNNKSLKRGREGKSDVDEPLIK. Positions 23-56 are enriched in basic and acidic residues; sequence LTSDEDGSGKLVKDNNKSLKRGREGKSDVDEPLI. A Phosphoserine modification is found at Ser-25. The Q motif motif lies at 80 to 108; the sequence is TRFDQFPLSPLTLKGIEDAGFKTMTVVQE. A Helicase ATP-binding domain is found at 111–294; the sequence is LPLILQGKDI…HVALKRDHEF (184 aa). An ATP-binding site is contributed by 124-131; it reads AKTGTGKT. The DEAD box signature appears at 242–245; sequence DEAD. One can recognise a Helicase C-terminal domain in the interval 328–479; it reads LLKKHITDNV…AVKKVQKGLI (152 aa).

It belongs to the DEAD box helicase family.

The enzyme catalyses ATP + H2O = ADP + phosphate + H(+). In Arabidopsis thaliana (Mouse-ear cress), this protein is DEAD-box ATP-dependent RNA helicase 25 (RH25).